A 22-amino-acid chain; its full sequence is CPAIQRCCQQLRNIQPPCRCCQ.

In terms of processing, glycosylated; contains 2.5% carbohydrates.

Its function is as follows. Chitin-binding protein. Has antifungal activity against F.solani, F.oxysporum, C.musae and C.gloesporoides but not against P.oligandrum. Depending on concentration the antifungal activity can be fungistatic or fungicidal. Inhibits both spore germination and mycelial growth in F.solani at a concentration of 0.1 mg/ml. Has antifungal activity against C.krusei, C.albicans, C.tropicalis and C.parapsilosis. Has no chitinase, beta-glucanase or hemagglutinating activity. Acts as a flocculent. This chain is Chitin-binding protein 3, found in Moringa oleifera (Horseradish tree).